A 244-amino-acid polypeptide reads, in one-letter code: MNMRVFIFLIFAAASVSACGRLASVGQTPNLTSPADGNEVFAMNVVPIPDARDVPSRTEGASLWTSGRASLLGDRRASLRGDILTVVIEIDDSAEFSNSSERERSGSEQMGISNLFGLPQRVDGLLTQGGSLGEAVELDSASRSSGEGAIRRNEQLTLRVAATITEVLQNGVLRIEGSQEVRVNNEVRELLVTGYVRPEDISRQNAIEYDRIAAARISYGGRGLITDAQRPRYGQEIADTVLPF.

Residues 1–18 (MNMRVFIFLIFAAASVSA) form the signal peptide. C19 is lipidated: N-palmitoyl cysteine. The S-diacylglycerol cysteine moiety is linked to residue C19.

Belongs to the FlgH family. The basal body constitutes a major portion of the flagellar organelle and consists of four rings (L,P,S, and M) mounted on a central rod.

The protein resides in the cell outer membrane. It localises to the bacterial flagellum basal body. In terms of biological role, assembles around the rod to form the L-ring and probably protects the motor/basal body from shearing forces during rotation. The sequence is that of Flagellar L-ring protein from Jannaschia sp. (strain CCS1).